The sequence spans 132 residues: Large ribosomal subunit protein uL14 (132 aa).

Belongs to the universal ribosomal protein uL14 family. Part of the 50S ribosomal subunit. Forms a cluster with proteins L3 and L24e, part of which may contact the 16S rRNA in 2 intersubunit bridges.

Functionally, binds to 23S rRNA. Forms part of two intersubunit bridges in the 70S ribosome. The polypeptide is Large ribosomal subunit protein uL14 (Methanococcus vannielii).